The primary structure comprises 220 residues: 1-Cys peroxiredoxin B (220 aa).

The Thioredoxin domain maps to 4-165; the sequence is LTLGDVVPDL…VLRATDALLT (162 aa). The active-site Cysteine sulfenic acid (-SOH) intermediate is the Cys46. A Bipartite nuclear localization signal motif is present at residues 195 to 218; the sequence is KARFPAGFETAQLPSNKCYLRFTQ.

This sequence belongs to the peroxiredoxin family. Prx6 subfamily.

The protein localises to the nucleus. The protein resides in the cytoplasm. The enzyme catalyses a hydroperoxide + [thioredoxin]-dithiol = an alcohol + [thioredoxin]-disulfide + H2O. Thiol-specific peroxidase that catalyzes the reduction of hydrogen peroxide and organic hydroperoxides to water and alcohols, respectively. Seems to contribute to the inhibition of germination during stress. This is 1-Cys peroxiredoxin B from Oryza sativa subsp. indica (Rice).